We begin with the raw amino-acid sequence, 403 residues long: Neuromedin U receptor homolog nmur-2 (403 aa).

Over 1–27 (MSQCTVEYNVSEITEYVLSTLGERCQS) the chain is Extracellular. Residues 28–48 (AGIVIPTVIIYGTIFLLGLFG) form a helical membrane-spanning segment. At 49–68 (NICTCIVIAANKSMHNPTNY) the chain is on the cytoplasmic side. Residues 69–89 (YLFSLAVSDIIALILGLPMEF) form a helical membrane-spanning segment. Residues 90-109 (YQSLDYSYPYRFSEGICKAR) lie on the Extracellular side of the membrane. A helical membrane pass occupies residues 110-130 (AFLIEFTSYASIMIICCFSFE). Residues 131–151 (RWLAICHPLRSKIFSTLWRAN) lie on the Cytoplasmic side of the membrane. The chain crosses the membrane as a helical span at residues 152-172 (VLIILAWTISFVCALPIAFIV). Residues 173–216 (QINKLPLPEDAKYQPWTNKVSTDGIFVLHTEFCAMNQSRPDQQK) lie on the Extracellular side of the membrane. The chain crosses the membrane as a helical span at residues 217–237 (MIIIFAFTVFFVIPAIAIVIM). Residues 238 to 268 (YAHIAVQLESSEIDLKGDKMVKKRRNKSNRT) are Cytoplasmic-facing. A helical transmembrane segment spans residues 269–289 (VLKMLLSVVITFFICWLPFHI). Topologically, residues 290 to 304 (QRLLSVYTTWSETTT) are extracellular. Residues 305–325 (ISPPVQFLSMIVFYISGFCYY) form a helical membrane-spanning segment. Residues 326–403 (SNSAANPILY…PHRKLEVHNY (78 aa)) lie on the Cytoplasmic side of the membrane.

The protein belongs to the G-protein coupled receptor 1 family.

The protein localises to the membrane. Its function is as follows. Putative G protein-coupled receptor for pyrokinin-like neuropeptide derived from the processing of the neuropeptide precursor capa-1. The sequence is that of Neuromedin U receptor homolog nmur-2 from Caenorhabditis elegans.